The sequence spans 343 residues: D-alanine--D-alanine ligase (343 aa).

An ATP-grasp domain is found at 129-335 (KYVLENFGVK…YGELISEIIE (207 aa)). Position 162 to 217 (162 to 217 (ENKLGYDVFIKPSNSGSSVGISKAHNREELEAGLEEALKFDRKVLVEVALNAREIE)) interacts with ATP. 3 residues coordinate Mg(2+): Asp-288, Glu-302, and Asn-304.

Belongs to the D-alanine--D-alanine ligase family. The cofactor is Mg(2+). Mn(2+) serves as cofactor.

The protein localises to the cytoplasm. The catalysed reaction is 2 D-alanine + ATP = D-alanyl-D-alanine + ADP + phosphate + H(+). It functions in the pathway cell wall biogenesis; peptidoglycan biosynthesis. Its function is as follows. Cell wall formation. This Clostridium novyi (strain NT) protein is D-alanine--D-alanine ligase.